Reading from the N-terminus, the 921-residue chain is Protein translocase subunit SecA (921 aa).

ATP is bound by residues Gln-86, 104-108 (GEGKT), and Asp-497. Over residues 829 to 838 (QQAPQQQPQQ) the composition is skewed to low complexity. Residues 829 to 921 (QQAPQQQPQQ…CHGAIETQKA (93 aa)) form a disordered region. A compositionally biased stretch (pro residues) spans 839–855 (VAPPPRPQPPQPAPQPP). Zn(2+) is bound by residues Cys-901, Cys-903, Cys-912, and His-913.

It belongs to the SecA family. As to quaternary structure, monomer and homodimer. Part of the essential Sec protein translocation apparatus which comprises SecA, SecYEG and auxiliary proteins SecDF-YajC and YidC. It depends on Zn(2+) as a cofactor.

Its subcellular location is the cell inner membrane. It is found in the cytoplasm. The enzyme catalyses ATP + H2O + cellular proteinSide 1 = ADP + phosphate + cellular proteinSide 2.. In terms of biological role, part of the Sec protein translocase complex. Interacts with the SecYEG preprotein conducting channel. Has a central role in coupling the hydrolysis of ATP to the transfer of proteins into and across the cell membrane, serving both as a receptor for the preprotein-SecB complex and as an ATP-driven molecular motor driving the stepwise translocation of polypeptide chains across the membrane. The protein is Protein translocase subunit SecA of Hyphomonas neptunium (strain ATCC 15444).